The primary structure comprises 89 residues: MAHKKAGGSSRNGRDSESKRLGVKKFGGETVIAGNIIIRQRGTRWHPGDNVGIGKDHTLFALSNGVVSFQRKANNRSYVSVVSMVEAEE.

Residues 1 to 21 (MAHKKAGGSSRNGRDSESKRL) are disordered.

This sequence belongs to the bacterial ribosomal protein bL27 family.

In Bartonella quintana (strain Toulouse) (Rochalimaea quintana), this protein is Large ribosomal subunit protein bL27.